We begin with the raw amino-acid sequence, 132 residues long: Inclusion membrane protein E (132 aa).

A run of 2 helical transmembrane segments spans residues 41 to 61 (LGVV…AVGV) and 66 to 86 (FALG…ATSA).

Its subcellular location is the secreted. It is found in the host vacuole. It localises to the host pathogen-containing vacuole. The protein localises to the host pathogen-containing vacuole membrane. In terms of biological role, inclusion membrane protein probably involved in early modification events of the chlamydial inclusion. The chain is Inclusion membrane protein E from Chlamydia trachomatis serovar L2 (strain ATCC VR-902B / DSM 19102 / 434/Bu).